The sequence spans 146 residues: Hut operon positive regulatory protein (146 aa).

It belongs to the HutP family. In terms of assembly, homohexamer.

Its function is as follows. Antiterminator that binds to cis-acting regulatory sequences on the mRNA in the presence of histidine, thereby suppressing transcription termination and activating the hut operon for histidine utilization. This chain is Hut operon positive regulatory protein, found in Bacillus cereus (strain G9842).